We begin with the raw amino-acid sequence, 452 residues long: MQRRIMGIETEFGVTCTFHGHRRLSPDEVARYLFRRVVSWGRSSNVFLRNGARLYLDVGSHPEYATAECDSLVQLVTHDRAGERVLEDLLVDAEQRLSDEGIGGDIYLFKNNTDSAGNSYGCHENYLIVRAGEFSRISDVLLPFLVTRQLICGAGKVLQTPKAATYCLSQRAEHIWEGVSSATTRSRPIINTRDEPHADAEKYRRLHVIVGDSNMAETTTMLKVGTAALVLEMIESGVAFRDFSLDNPIRAIREVSHDLTGRRPVRLAGGRQASALDIQREYHARAVEHLNTREPNEQVEQVVELWGRTLDAVESQDFSKVDTEIDWVIKRKLFQRYQDRYNMELSDPKIAQLDLAYHDIKRGRGVFDLLQRKGLAARVTTDEEIKAAVDQPPQTTRAKLRGDFITAAQEAGRDFTVDWVHLKLNDQAQRTVLCKDPFRSVDERVERLIASM.

Mg(2+) is bound at residue glutamate 9. Residue arginine 53 participates in ATP binding. Tyrosine 55 serves as a coordination point for Mg(2+). The Proton acceptor role is filled by aspartate 57. Glutamate 63 contributes to the Mg(2+) binding site. ATP contacts are provided by threonine 66 and tryptophan 419.

Belongs to the Pup ligase/Pup deamidase family. Pup-conjugating enzyme subfamily.

The enzyme catalyses ATP + [prokaryotic ubiquitin-like protein]-L-glutamate + [protein]-L-lysine = ADP + phosphate + N(6)-([prokaryotic ubiquitin-like protein]-gamma-L-glutamyl)-[protein]-L-lysine.. Its pathway is protein degradation; proteasomal Pup-dependent pathway. It participates in protein modification; protein pupylation. Its function is as follows. Catalyzes the covalent attachment of the prokaryotic ubiquitin-like protein modifier Pup to the proteasomal substrate proteins, thereby targeting them for proteasomal degradation. This tagging system is termed pupylation. The ligation reaction involves the side-chain carboxylate of the C-terminal glutamate of Pup and the side-chain amino group of a substrate lysine. This Mycobacteroides abscessus (strain ATCC 19977 / DSM 44196 / CCUG 20993 / CIP 104536 / JCM 13569 / NCTC 13031 / TMC 1543 / L948) (Mycobacterium abscessus) protein is Pup--protein ligase.